The following is a 256-amino-acid chain: Rhamnolipids biosynthesis 3-oxoacyl-[acyl-carrier-protein] reductase (256 aa).

14 to 38 is a binding site for NADP(+); sequence VTGGSRGIGQMIAQGLLEAGARVFI. S148 is a binding site for substrate. The active-site Proton acceptor is Y162.

This sequence belongs to the short-chain dehydrogenases/reductases (SDR) family.

The enzyme catalyses a (3R)-hydroxyacyl-[ACP] + NADP(+) = a 3-oxoacyl-[ACP] + NADPH + H(+). The protein operates within lipid metabolism; rhamnolipid biosynthesis. Its function is as follows. Required for the synthesis of the beta-hydroxy acid moiety of rhamnolipids. The polypeptide is Rhamnolipids biosynthesis 3-oxoacyl-[acyl-carrier-protein] reductase (rhlG) (Pseudomonas aeruginosa (strain ATCC 15692 / DSM 22644 / CIP 104116 / JCM 14847 / LMG 12228 / 1C / PRS 101 / PAO1)).